Consider the following 324-residue polypeptide: Glyoxylate/hydroxypyruvate reductase B (324 aa).

Catalysis depends on residues arginine 237 and glutamate 266. Histidine 285 acts as the Proton donor in catalysis.

The protein belongs to the D-isomer specific 2-hydroxyacid dehydrogenase family. GhrB subfamily. In terms of assembly, homodimer.

It is found in the cytoplasm. It catalyses the reaction glycolate + NADP(+) = glyoxylate + NADPH + H(+). The enzyme catalyses (R)-glycerate + NAD(+) = 3-hydroxypyruvate + NADH + H(+). It carries out the reaction (R)-glycerate + NADP(+) = 3-hydroxypyruvate + NADPH + H(+). Its function is as follows. Catalyzes the NADPH-dependent reduction of glyoxylate and hydroxypyruvate into glycolate and glycerate, respectively. The polypeptide is Glyoxylate/hydroxypyruvate reductase B (Salmonella agona (strain SL483)).